Consider the following 520-residue polypeptide: MAFLRAIGAEARYLTQRAYSSAAPTTKLFIDGKFVESKTKEWIDVHDPATNKVVTRVPKATQDEMQTALESNKKAFRSWSNQSILTRQAVMFKLQALIKENMGELAKNITKEQGKTLADAEGDVLRGLQVVEHCCSIPSLQMGETVANVARDMDTYSLVMPLGVTAGIAPFNFPAMIPLWMFPVAITTGNTMLLKPSERVPGATMLLMELLNEAGCPPGVVNVIHGQHDAVNFICDAPAIKAVSFVGSDQAGKYIYERAGKNGKRVQSNMGAKNHGVILSDANKENTLNQLAGAAFGAAGQRCMALSTAVFVGDAQGWIPDLVERAQKLKVNAGHVPGTDVGPVISAASRQRINDLIESGVKEGAKLILDGRKISVPGFEDGYFVGPTILSDVTPSMKCYTEEIFGPVLVILKADNLDDAIDIVNANPYGNGTAVFTTNGAAARKFVNEIDAGQVGVNVPIPVPLPMFSFTGTRGSFRGDHHFYGKQGIKFYTQTKTVTQLWRETDVNHTQAAVAMPTMK.

Residues Ala169, Phe171, Lys195, Glu198, Arg199, and Ser248 each contribute to the NAD(+) site. The active-site Nucleophile is Cys303. Residue Glu403 participates in NAD(+) binding.

The protein belongs to the aldehyde dehydrogenase family. In terms of assembly, homotetramer.

It is found in the mitochondrion. It catalyses the reaction 2-methyl-3-oxopropanoate + NAD(+) + CoA + H2O = propanoyl-CoA + hydrogencarbonate + NADH + H(+). It carries out the reaction 3-oxopropanoate + NAD(+) + CoA + H2O = hydrogencarbonate + acetyl-CoA + NADH + H(+). In terms of biological role, probable malonate and methylmalonate semialdehyde dehydrogenase involved in the catabolism of valine, thymine, and compounds catabolized by way of beta-alanine, including uracil and cytidine. The chain is Probable methylmalonate-semialdehyde/malonate-semialdehyde dehydrogenase [acylating], mitochondrial from Drosophila pseudoobscura pseudoobscura (Fruit fly).